The sequence spans 314 residues: 4-hydroxy-3-methylbut-2-enyl diphosphate reductase (314 aa).

Residue C12 participates in [4Fe-4S] cluster binding. Residues H43 and H81 each contribute to the (2E)-4-hydroxy-3-methylbut-2-enyl diphosphate site. Residues H43 and H81 each contribute to the dimethylallyl diphosphate site. Residues H43 and H81 each contribute to the isopentenyl diphosphate site. Residue C103 coordinates [4Fe-4S] cluster. H131 contacts (2E)-4-hydroxy-3-methylbut-2-enyl diphosphate. H131 is a binding site for dimethylallyl diphosphate. H131 contacts isopentenyl diphosphate. E133 functions as the Proton donor in the catalytic mechanism. Position 170 (T170) interacts with (2E)-4-hydroxy-3-methylbut-2-enyl diphosphate. [4Fe-4S] cluster is bound at residue C198. Positions 226, 228, and 271 each coordinate (2E)-4-hydroxy-3-methylbut-2-enyl diphosphate. Dimethylallyl diphosphate-binding residues include S226, N228, and S271. 3 residues coordinate isopentenyl diphosphate: S226, N228, and S271.

This sequence belongs to the IspH family. [4Fe-4S] cluster is required as a cofactor.

The catalysed reaction is isopentenyl diphosphate + 2 oxidized [2Fe-2S]-[ferredoxin] + H2O = (2E)-4-hydroxy-3-methylbut-2-enyl diphosphate + 2 reduced [2Fe-2S]-[ferredoxin] + 2 H(+). The enzyme catalyses dimethylallyl diphosphate + 2 oxidized [2Fe-2S]-[ferredoxin] + H2O = (2E)-4-hydroxy-3-methylbut-2-enyl diphosphate + 2 reduced [2Fe-2S]-[ferredoxin] + 2 H(+). It functions in the pathway isoprenoid biosynthesis; dimethylallyl diphosphate biosynthesis; dimethylallyl diphosphate from (2E)-4-hydroxy-3-methylbutenyl diphosphate: step 1/1. Its pathway is isoprenoid biosynthesis; isopentenyl diphosphate biosynthesis via DXP pathway; isopentenyl diphosphate from 1-deoxy-D-xylulose 5-phosphate: step 6/6. Functionally, catalyzes the conversion of 1-hydroxy-2-methyl-2-(E)-butenyl 4-diphosphate (HMBPP) into a mixture of isopentenyl diphosphate (IPP) and dimethylallyl diphosphate (DMAPP). Acts in the terminal step of the DOXP/MEP pathway for isoprenoid precursor biosynthesis. The chain is 4-hydroxy-3-methylbut-2-enyl diphosphate reductase from Halalkalibacterium halodurans (strain ATCC BAA-125 / DSM 18197 / FERM 7344 / JCM 9153 / C-125) (Bacillus halodurans).